The chain runs to 231 residues: Protein APE_1056.1 (231 aa).

Residues 29-214 (VRIARRAVEE…ETEPRGPVVR (186 aa)) form the AMMECR1 domain.

The polypeptide is Protein APE_1056.1 (Aeropyrum pernix (strain ATCC 700893 / DSM 11879 / JCM 9820 / NBRC 100138 / K1)).